Reading from the N-terminus, the 196-residue chain is Rho-related protein racA (196 aa).

GTP-binding residues include Ala-13, Gly-15, Lys-16, Thr-17, Cys-18, Tyr-32, Thr-35, Gly-60, Lys-116, Asp-118, and Ala-159. A Mg(2+)-binding site is contributed by Thr-17. 2 short sequence motifs (switch) span residues 26-37 and 57-75; these read NAFPNEYIPTVF and DTAG…YPQT. Thr-35 provides a ligand contact to Mg(2+). At Cys-193 the chain carries Cysteine methyl ester. The S-geranylgeranyl cysteine moiety is linked to residue Cys-193. Positions 194–196 are cleaved as a propeptide — removed in mature form; it reads LLF.

This sequence belongs to the small GTPase superfamily. Rho family. As to quaternary structure, interacts (GTP-bound form) with PAK2 (via CRIB domain). Requires Mg(2+) as cofactor.

Its subcellular location is the cell membrane. The protein localises to the cytoplasm. The protein resides in the cytoskeleton. It catalyses the reaction GTP + H2O = GDP + phosphate + H(+). With respect to regulation, regulated by guanine nucleotide exchange factors (GEFs) which promote the exchange of bound GDP for free GTP, GTPase activating proteins (GAPs) which increase the GTP hydrolysis activity, and GDP dissociation inhibitors which inhibit the dissociation of the nucleotide from the GTPase. Functionally, small GTPase which cycles between active GTP-bound and inactive GDP-bound states. Involved in cytoskeleton remodeling. Plays a role in phagocytosis of bacteria and host erythrocytes. Involved in capping of surface receptors. May be involved in cytokinesis. This chain is Rho-related protein racA, found in Entamoeba histolytica (strain ATCC 30459 / HM-1:IMSS / ABRM).